The sequence spans 163 residues: Large ribosomal subunit protein uL11 (163 aa).

A disordered region spans residues 1–26 (MAETIEVLVAGGQADPGPPLGPELGP).

The protein belongs to the universal ribosomal protein uL11 family. In terms of assembly, part of the ribosomal stalk of the 50S ribosomal subunit. Interacts with L10 and the large rRNA to form the base of the stalk. L10 forms an elongated spine to which L12 dimers bind in a sequential fashion forming a multimeric L10(L12)X complex.

Forms part of the ribosomal stalk which helps the ribosome interact with GTP-bound translation factors. This is Large ribosomal subunit protein uL11 from Halobacterium salinarum (strain ATCC 29341 / DSM 671 / R1).